A 382-amino-acid chain; its full sequence is Flap endonuclease 1 (382 aa).

Residues Met-1–Arg-104 are N-domain. Asp-34 provides a ligand contact to Mg(2+). DNA-binding residues include Arg-47 and Arg-70. 5 residues coordinate Mg(2+): Asp-86, Glu-158, Glu-160, Asp-179, and Asp-181. The tract at residues Glu-122 to His-253 is I-domain. Residue Glu-158 coordinates DNA. The DNA site is built by Gly-231 and Asp-233. Residue Asp-233 participates in Mg(2+) binding. The tract at residues Thr-336–Phe-344 is interaction with PCNA. The span at Lys-359–Lys-368 shows a compositional bias: basic and acidic residues. The tract at residues Lys-359–Lys-382 is disordered. Positions Lys-369–Lys-382 are enriched in basic residues.

It belongs to the XPG/RAD2 endonuclease family. FEN1 subfamily. In terms of assembly, interacts with PCNA. Three molecules of crn-1 bind to one PCNA trimer with each molecule binding to one PCNA monomer. PCNA stimulates the nuclease activity without altering cleavage specificity. It depends on Mg(2+) as a cofactor. In terms of processing, phosphorylated. Phosphorylation upon DNA damage induces relocalization to the nuclear plasma.

The protein resides in the nucleus. It localises to the nucleolus. Its subcellular location is the nucleoplasm. The protein localises to the mitochondrion. Functionally, structure-specific nuclease with 5'-flap endonuclease and 5'-3' exonuclease activities involved in DNA replication and repair. During DNA replication, cleaves the 5'-overhanging flap structure that is generated by displacement synthesis when DNA polymerase encounters the 5'-end of a downstream Okazaki fragment. It enters the flap from the 5'-end and then tracks to cleave the flap base, leaving a nick for ligation. Also involved in the long patch base excision repair (LP-BER) pathway, by cleaving within the apurinic/apyrimidinic (AP) site-terminated flap. Acts as a genome stabilization factor that prevents flaps from equilibrating into structures that lead to duplications and deletions. Also possesses 5'-3' exonuclease activity on nicked or gapped double-stranded DNA, and exhibits RNase H activity. Also involved in replication and repair of rDNA and in repairing mitochondrial DNA. This Caenorhabditis briggsae protein is Flap endonuclease 1.